Reading from the N-terminus, the 1692-residue chain is Tyrosine-protein phosphatase non-receptor type 23 (1692 aa).

Positions 8–394 constitute a BRO1 domain; sequence PMIWLDLKEA…AKIEDKNEVL (387 aa). TPR repeat units lie at residues 250-283 and 374-407; these read AVAH…LNEA and EEKA…DPET. A coiled-coil region spans residues 552 to 639; sequence KAVLQNLKRI…RALTEANVQY (88 aa). Disordered regions lie at residues 711–788, 884–923, and 944–1199; these read DREL…PATH, DSVQ…PQPQ, and TYSI…LLQP. The residue at position 744 (threonine 744) is a Phosphothreonine. Positions 773 to 1186 are his; it reads HFSPGPFPSS…SSSPESQHGG (414 aa). Residues 774 to 785 are compositionally biased toward low complexity; it reads FSPGPFPSSTGP. A compositionally biased stretch (polar residues) spans 884–894; the sequence is DSVQAPISSHT. A compositionally biased stretch (pro residues) spans 897–923; the sequence is RPNPTPALPQPCFPVPQPVPQSVPQPQ. Omega-N-methylarginine is present on arginine 974. A run of 21 repeats spans residues 977-978, 979-980, 981-982, 983-984, 985-986, 987-988, 989-990, 991-992, 993-994, 995-996, 997-998, 999-1000, 1001-1002, 1003-1004, 1005-1006, 1007-1008, 1009-1010, 1011-1012, 1013-1014, 1015-1016, and 1017-1018. Residues 977-1018 form a 21 X 2 AA approximate tandem repeats of P-Q region; that stretch reads PQAQAQPQPQPQPQPQPQPQPQPQPQPQSQSQPQPQPQPQPQ. The segment covering 984–1002 has biased composition (pro residues); that stretch reads QPQPQPQPQPQPQPQPQPQ. Composition is skewed to pro residues over residues 1093–1102 and 1127–1165; these read FPSPGPPHPH and GPPP…PPPC. Phosphoserine is present on residues serine 1178 and serine 1179. Threonine 1187 carries the post-translational modification Phosphothreonine. The 261-residue stretch at 1248-1508 folds into the Tyrosine-protein phosphatase domain; that stretch reads DAIWRELQEA…KFCHEALVRH (261 aa). Cysteine 1448 serves as the catalytic Phosphocysteine intermediate. The tract at residues 1574-1638 is disordered; it reads ASLPGLVEPP…PSSSLELLAS (65 aa). A compositionally biased stretch (pro residues) spans 1598-1612; that stretch reads SSSPPPLSSPLPEAP. Residues 1620–1638 show a composition bias toward low complexity; it reads VPEAPSLGPPSSSLELLAS. Arginine 1671 carries the omega-N-methylarginine modification.

The protein belongs to the protein-tyrosine phosphatase family. Non-receptor class subfamily. Interacts with GRAP2 and GRB2. Interacts with UBAP1 and CHMP4B.

It is found in the nucleus. Its subcellular location is the cytoplasm. It localises to the cytoplasmic vesicle. The protein resides in the endosome. The protein localises to the cytoskeleton. It is found in the cilium basal body. The enzyme catalyses O-phospho-L-tyrosyl-[protein] + H2O = L-tyrosyl-[protein] + phosphate. Plays a role in sorting of endocytic ubiquitinated cargos into multivesicular bodies (MVBs) via its interaction with the ESCRT-I complex (endosomal sorting complex required for transport I), and possibly also other ESCRT complexes. May act as a negative regulator of Ras-mediated mitogenic activity. Plays a role in ciliogenesis. The polypeptide is Tyrosine-protein phosphatase non-receptor type 23 (Ptpn23) (Mus musculus (Mouse)).